We begin with the raw amino-acid sequence, 63 residues long: Large ribosomal subunit protein uL30 (63 aa).

This sequence belongs to the universal ribosomal protein uL30 family. In terms of assembly, part of the 50S ribosomal subunit.

The protein is Large ribosomal subunit protein uL30 of Caulobacter sp. (strain K31).